Reading from the N-terminus, the 245-residue chain is tRNA1(Val) (adenine(37)-N6)-methyltransferase (245 aa).

It belongs to the methyltransferase superfamily. tRNA (adenine-N(6)-)-methyltransferase family.

It localises to the cytoplasm. It carries out the reaction adenosine(37) in tRNA1(Val) + S-adenosyl-L-methionine = N(6)-methyladenosine(37) in tRNA1(Val) + S-adenosyl-L-homocysteine + H(+). In terms of biological role, specifically methylates the adenine in position 37 of tRNA(1)(Val) (anticodon cmo5UAC). In Shigella sonnei (strain Ss046), this protein is tRNA1(Val) (adenine(37)-N6)-methyltransferase.